The sequence spans 225 residues: Zinc finger protein 22 (225 aa).

The segment at 1–35 (MRLGKPKGGISRSSSQGKVYENQRKTGRQRQRWGM) is disordered. At Lys18 the chain carries N6-acetyllysine. 5 consecutive C2H2-type zinc fingers follow at residues 55-77 (YKCV…QKIH), 83-105 (HKCA…RRVH), 111-133 (YRCD…QRIH), 139-161 (YQCD…QRTH), and 167-189 (YQCS…TKVH). Residues 183–225 (RQHTKVHEEEKPRKTRGRSLRAKTHSLSSWKAGKGRRSAAGLR) are disordered. Residues 195 to 206 (RKTRGRSLRAKT) show a composition bias toward basic residues.

This sequence belongs to the krueppel C2H2-type zinc-finger protein family.

Its subcellular location is the nucleus. Its function is as follows. Binds DNA through the consensus sequence 5'-CAATG-3'. May be involved in transcriptional regulation and may play a role in tooth formation. This Bos taurus (Bovine) protein is Zinc finger protein 22 (ZNF22).